Consider the following 756-residue polypeptide: Disintegrin and metalloproteinase domain-containing protein 5 (756 aa).

The N-terminal stretch at 1 to 16 (MFLLLVLLTGLGGMHA) is a signal peptide. A propeptide spanning residues 17–142 (DLNPHKTFLQ…AVSGFIHKIY (126 aa)) is cleaved from the precursor. The Extracellular segment spans residues 17–698 (DLNPHKTFLQ…GRHAPFQKQR (682 aa)). The Peptidase M12B domain maps to 183–380 (RYIEMHIVVD…NGLTCLQTNP (198 aa)). 4 cysteine pairs are disulfide-bonded: Cys-292–Cys-375, Cys-334–Cys-359, Cys-336–Cys-341, and Cys-449–Cys-470. The Disintegrin domain occupies 389–478 (RRICGNGLLE…YCLLDTYVRD (90 aa)). N-linked (GlcNAc...) asparagine glycosylation occurs at Asn-559. Residues 630-664 (DFETCEASIECSGHGICNNFNHCHCEKGYNPPHCK) form the EGF-like domain. Disulfide bonds link Cys-634-Cys-646, Cys-640-Cys-652, and Cys-654-Cys-663. A helical membrane pass occupies residues 699 to 719 (FQLIFYISLPVLIITTAILIK). At 720–756 (RKKLRELCYRGETESESSVSQESSSNSKSSLSESTSL) the chain is on the cytoplasmic side. The interval 731–756 (ETESESSVSQESSSNSKSSLSESTSL) is disordered. Residues 735 to 756 (ESSVSQESSSNSKSSLSESTSL) are compositionally biased toward low complexity.

As to quaternary structure, interacts with TEX101. Subject to proteolytic processing during epididymal transit of spermatozoa. In terms of tissue distribution, detected in testis (at protein level). Detected in adult and prepubertal testis. Detected at very low levels in heart, kidney, brain, muscle ovary and uterus.

The protein resides in the membrane. Functionally, this is a non catalytic metalloprotease-like protein. May play a role in sperm-egg fusion. The protein is Disintegrin and metalloproteinase domain-containing protein 5 (ADAM5) of Macaca fascicularis (Crab-eating macaque).